Consider the following 765-residue polypeptide: 5-methyltetrahydropteroyltriglutamate--homocysteine methyltransferase (765 aa).

5-methyltetrahydropteroyltri-L-glutamate is bound by residues 18–21 (REWK) and Lys-114. L-homocysteine contacts are provided by residues 437–439 (IGS) and Glu-490. L-methionine is bound by residues 437–439 (IGS) and Glu-490. Trp-567 provides a ligand contact to 5-methyltetrahydropteroyltri-L-glutamate. Asp-605 is a binding site for L-homocysteine. Asp-605 serves as a coordination point for L-methionine. Glu-611 serves as a coordination point for 5-methyltetrahydropteroyltri-L-glutamate. Residues His-647, Cys-649, and Glu-671 each coordinate Zn(2+). The active-site Proton donor is His-700. Cys-732 contributes to the Zn(2+) binding site.

It belongs to the vitamin-B12 independent methionine synthase family. Zn(2+) serves as cofactor.

The enzyme catalyses 5-methyltetrahydropteroyltri-L-glutamate + L-homocysteine = tetrahydropteroyltri-L-glutamate + L-methionine. It functions in the pathway amino-acid biosynthesis; L-methionine biosynthesis via de novo pathway; L-methionine from L-homocysteine (MetE route): step 1/1. In terms of biological role, catalyzes the transfer of a methyl group from 5-methyltetrahydrofolate to homocysteine resulting in methionine formation. This chain is 5-methyltetrahydropteroyltriglutamate--homocysteine methyltransferase, found in Listeria innocua serovar 6a (strain ATCC BAA-680 / CLIP 11262).